The primary structure comprises 428 residues: Putative UDP-glucose 6-dehydrogenase YtcA (428 aa).

The signal sequence occupies residues 1-23; that stretch reads MKICVVGAGYVGLTLSAALASIG. NAD(+) is bound by residues 2 to 19, valine 11, aspartate 30, lysine 35, threonine 118, and glutamate 152; that span reads KICV…SAAL. Substrate contacts are provided by residues 148–152, lysine 203, asparagine 207, 248–252, and glycine 256; these read EFLRE and FLQAG. Cysteine 259 (nucleophile) is an active-site residue. Lysine 262 serves as a coordination point for NAD(+). A substrate-binding site is contributed by lysine 319. Arginine 326 serves as a coordination point for NAD(+).

The protein belongs to the UDP-glucose/GDP-mannose dehydrogenase family.

It catalyses the reaction UDP-alpha-D-glucose + 2 NAD(+) + H2O = UDP-alpha-D-glucuronate + 2 NADH + 3 H(+). Its pathway is nucleotide-sugar biosynthesis; UDP-alpha-D-glucuronate biosynthesis; UDP-alpha-D-glucuronate from UDP-alpha-D-glucose: step 1/1. Catalyzes the conversion of UDP-glucose into UDP-glucuronate, one of the precursors of teichuronic acid. The polypeptide is Putative UDP-glucose 6-dehydrogenase YtcA (ytcA) (Bacillus subtilis (strain 168)).